The sequence spans 185 residues: Sulfopyruvate decarboxylase subunit beta (185 aa).

This sequence belongs to the TPP enzyme family. Heterododecamer composed of 6 subunits alpha and 6 subunits beta. The cofactor is thiamine diphosphate.

The enzyme catalyses 3-sulfopyruvate + H(+) = sulfoacetaldehyde + CO2. It participates in cofactor biosynthesis; coenzyme M biosynthesis; sulfoacetaldehyde from phosphoenolpyruvate and sulfite: step 4/4. In terms of biological role, involved in the biosynthesis of the coenzyme M (2-mercaptoethanesulfonic acid). Catalyzes the decarboxylation of sulfopyruvate to sulfoacetaldehyde. This Methanothermobacter thermautotrophicus (strain ATCC 29096 / DSM 1053 / JCM 10044 / NBRC 100330 / Delta H) (Methanobacterium thermoautotrophicum) protein is Sulfopyruvate decarboxylase subunit beta.